We begin with the raw amino-acid sequence, 462 residues long: Annexin A7 (462 aa).

The segment at 1–130 (MSYPPNQGYP…QGYPPQQGYP (130 aa)) is disordered. Residues 7-131 (QGYPPQSNSP…GYPPQQGYPP (125 aa)) form a 19 X 6 AA tandem repeats of Q-G-Y-P-P-Q region. Low complexity predominate over residues 16 to 130 (PQPGQYGAPQ…QGYPPQQGYP (115 aa)). Annexin repeat units lie at residues 161-232 (HDCK…ALLT), 233-304 (EPAH…KLTE), 315-388 (MQVS…AIVT), and 392-462 (NPYG…DIIS).

Belongs to the annexin family.

In terms of biological role, calcium/phospholipid-binding protein which promotes membrane fusion and is involved in exocytosis. The polypeptide is Annexin A7 (nxnA) (Dictyostelium discoideum (Social amoeba)).